Here is a 458-residue protein sequence, read N- to C-terminus: Macrophage scavenger receptor types I and II (458 aa).

At 1 to 55 (MTKEMTENQRLCPHEQEDADCSSESVKFDARSMTASLPHSTKNGPSLQEKLKSFK) the chain is on the cytoplasmic side. Ser-32 and Ser-36 each carry phosphoserine. The helical; Signal-anchor for type II membrane protein transmembrane segment at 56–78 (AALIALYLLVFAVLIPVVGIVTA) threads the bilayer. Residues 79-114 (QLLNWEMKNCLVCSLNTSDTSQGPMEKENTSKVEMR) are spacer. Residues 79–458 (QLLNWEMKNC…SEDAGVTCTS (380 aa)) lie on the Extracellular side of the membrane. N-linked (GlcNAc...) asparagine glycans are attached at residues Asn-94, Asn-107, Asn-147, Asn-188, Asn-253, and Asn-271. Residues 209–259 (TAKQQEDISKLEERVYKVSAEVQSVKEEQAHVEQEVKQEVRVLNNITNDLR) adopt a coiled-coil conformation. Residues 272 to 357 (ITFIQGPPGP…VGGSTPLKTV (86 aa)) form a disordered region. The 74-residue stretch at 277 to 350 (GPPGPQGEKG…QKGEKGSVGG (74 aa)) folds into the Collagen-like domain. Residues 316–325 (GFPGGRGNPG) are compositionally biased toward gly residues. A compositionally biased stretch (low complexity) spans 326–339 (APGKPGRSGSPGPK). Residues 357–457 (VRLVGGSGAH…HSEDAGVTCT (101 aa)) form the SRCR domain. Disulfide bonds link Cys-382–Cys-446, Cys-395–Cys-456, and Cys-426–Cys-436.

Homotrimer. Interacts with MYO18A.

Its subcellular location is the membrane. Functionally, membrane glycoproteins implicated in the pathologic deposition of cholesterol in arterial walls during atherogenesis. Two types of receptor subunits exist. These receptors mediate the endocytosis of a diverse group of macromolecules, including modified low density lipoproteins (LDL). In Mus musculus (Mouse), this protein is Macrophage scavenger receptor types I and II (Msr1).